Reading from the N-terminus, the 490-residue chain is Delta(14)-sterol reductase (490 aa).

The next 7 membrane-spanning stretches (helical) occupy residues 23-43 (FGGP…VHVF), 80-100 (VFGL…ALSL), 136-156 (LAIL…WTFI), 160-180 (FAQI…FVYV), 230-250 (EFME…AFIA), 255-275 (LYGY…FYVF), and 324-344 (QLGA…YSIF). Residues Lys351, Arg355, Ile378, Trp383, and 390 to 391 (NY) each bind NADP(+). The helical transmembrane segment at 436–456 (ARGWGIVFTYFYILYFAILLI) threads the bilayer. Residues Asp462, 466-470 (CSKKY), and Tyr477 contribute to the NADP(+) site.

The protein belongs to the ERG4/ERG24 family.

Its subcellular location is the membrane. The catalysed reaction is 4,4-dimethyl-5alpha-cholesta-8,24-dien-3beta-ol + NADP(+) = 4,4-dimethyl-5alpha-cholesta-8,14,24-trien-3beta-ol + NADPH + H(+). Its pathway is steroid biosynthesis; zymosterol biosynthesis; zymosterol from lanosterol: step 2/6. Functionally, reduces the C14=C15 double bond of 4,4-dimethyl-cholesta-8,14,24-trienol to produce 4,4-dimethyl-cholesta-8,24-dienol. The chain is Delta(14)-sterol reductase (erg-3) from Neurospora crassa (strain ATCC 24698 / 74-OR23-1A / CBS 708.71 / DSM 1257 / FGSC 987).